Here is a 372-residue protein sequence, read N- to C-terminus: Protein phosphatase Mn(2+)-dependent 1K (372 aa).

A mitochondrion-targeting transit peptide spans 1-29 (MSTAALLTLVRSGGNQVRRRVLLRARGLQ). Positions 46 to 61 (KWSRFDPDGSGRPATW) are critical for association with the BCKDH complex. The PPM-type phosphatase domain occupies 94-346 (NVGSASQIGK…DNTTAVVVPF (253 aa)). Residues D127 and G128 each contribute to the Mn(2+) site. A Phosphoserine modification is found at S248. The Mn(2+) site is built by D298 and D337.

Belongs to the PP2C family. Monomer. Interacts with E1 and E2 components of the branched-chain alpha-ketoacid dehydrogenase (BCKDH) complex; this interaction requires colocalization in mitochondria. Interacts with BCKDHA but not with BCKDHB of the E1 component. Interacts with the 24-meric E2 core composed of DBT monomers with a 24:1 stoichiometry; the N-terminal region (residues 49-61) of PPM1K and C-terminal linker of the lipoyl domain of DBT (residues 145-160) are critical for this interaction, whereas the lipoyl prosthetic group is dispensable. Competes with BCKDK for binding to the E2 core; this interaction is modulated by branched-chain alpha-keto acids. At steady state, BCKDH holoenzyme preferentially binds BCKDK and BCKDHA is phosphorylated. In response to high levels of branched-chain alpha-keto acids, the inhibitory BCKDK is replaced by activating PPM1K leading to BCKDHA dephosphorylation and BCAA degradation. Requires Mn(2+) as cofactor.

The protein resides in the mitochondrion matrix. The enzyme catalyses O-phospho-L-seryl-[3-methyl-2-oxobutanoate dehydrogenase] + H2O = L-seryl-[3-methyl-2-oxobutanoate dehydrogenase] + phosphate. It carries out the reaction O-phospho-L-seryl-[protein] + H2O = L-seryl-[protein] + phosphate. It participates in protein modification. Functionally, serine/threonine-protein phosphatase component of macronutrients metabolism. Forms a functional kinase and phosphatase pair with BCKDK, serving as a metabolic regulatory node that coordinates branched-chain amino acids (BCAAs) with glucose and lipid metabolism via two distinct phosphoprotein targets: mitochondrial BCKDHA subunit of the branched-chain alpha-ketoacid dehydrogenase (BCKDH) complex and cytosolic ACLY, a lipogenic enzyme of Krebs cycle. At high levels of branched-chain ketoacids, dephosphorylates and activates mitochondrial BCKDH complex, a multisubunit complex consisting of three multimeric components each involved in different steps of BCAA catabolism: E1 composed of BCKDHA and BCKDHB, E2 core composed of DBT monomers, and E3 composed of DLD monomers. Tightly associates with the E2 component of BCKDH complex and dephosphorylates BCKDHA on Ser-347. Regulates the reversible phosphorylation of ACLY in response to changes in cellular carbohydrate abundance such as occurs during fasting to feeding metabolic transition. At fasting state, appears to dephosphorylate ACLY on Ser-455 and inactivate it. Refeeding stimulates MLXIPL/ChREBP transcription factor, leading to increased BCKDK to PPM1K expression ratio, phosphorylation and activation of ACLY that ultimately results in the generation of malonyl-CoA and oxaloacetate immediate substrates of de novo lipogenesis and gluconeogenesis, respectively. Recognizes phosphosites having SxS or RxxS motifs and strictly depends on Mn(2+) ions for the phosphatase activity. Regulates Ca(2+)-induced opening of mitochondrial transition pore and apoptotic cell death. In Bos taurus (Bovine), this protein is Protein phosphatase Mn(2+)-dependent 1K (PPM1K).